Here is a 255-residue protein sequence, read N- to C-terminus: 3-deoxy-manno-octulosonate cytidylyltransferase (255 aa).

Belongs to the KdsB family.

It is found in the cytoplasm. It carries out the reaction 3-deoxy-alpha-D-manno-oct-2-ulosonate + CTP = CMP-3-deoxy-beta-D-manno-octulosonate + diphosphate. Its pathway is nucleotide-sugar biosynthesis; CMP-3-deoxy-D-manno-octulosonate biosynthesis; CMP-3-deoxy-D-manno-octulosonate from 3-deoxy-D-manno-octulosonate and CTP: step 1/1. The protein operates within bacterial outer membrane biogenesis; lipopolysaccharide biosynthesis. Its function is as follows. Activates KDO (a required 8-carbon sugar) for incorporation into bacterial lipopolysaccharide in Gram-negative bacteria. This Psychromonas ingrahamii (strain DSM 17664 / CCUG 51855 / 37) protein is 3-deoxy-manno-octulosonate cytidylyltransferase.